The chain runs to 324 residues: Methionyl-tRNA formyltransferase (324 aa).

Residue 114–117 (SLLP) participates in (6S)-5,6,7,8-tetrahydrofolate binding.

Belongs to the Fmt family.

It catalyses the reaction L-methionyl-tRNA(fMet) + (6R)-10-formyltetrahydrofolate = N-formyl-L-methionyl-tRNA(fMet) + (6S)-5,6,7,8-tetrahydrofolate + H(+). Functionally, attaches a formyl group to the free amino group of methionyl-tRNA(fMet). The formyl group appears to play a dual role in the initiator identity of N-formylmethionyl-tRNA by promoting its recognition by IF2 and preventing the misappropriation of this tRNA by the elongation apparatus. The sequence is that of Methionyl-tRNA formyltransferase from Parabacteroides distasonis (strain ATCC 8503 / DSM 20701 / CIP 104284 / JCM 5825 / NCTC 11152).